The sequence spans 451 residues: MEAGPPGSARPAEPGPCLSGQRGADHTASASLQSVAGTEPGRHPQAVAAVLPAGGCGERMGVPTPKQFCPILERPLISYTLQALERVCWIKDIVVAVTGENMEVMKSIIQKYQHKRISLVEAGVTRHRSIFNGLKALAEDQINSKLSKPEVVIIHDAVRPFVEEGVLLKVVTAAKEHGAAGAIRPLVSTVVSPSADGCLDYSLERARHRASEMPQAFLFDVIYEAYQQCSDYDLEFGTECLQLALKYCCTKAKLVEGSPDLWKVTYKRDLYAAESIIKERISQEICVVMDTEEDNKHVGHLLEEVLKSELNHVKVTSEALGHAGRHLQQIILDQCYNFVCVNVTTSDFQETQKLLSMLEESSLCILYPVVVVSVHFLDFKLVPPSQKMENLMQIREFAKEVKERNILLYGLLISYPQDDQKLQESLRQGAIIIASLIKERNSGLIGQLLIA.

Residues 1–29 (MEAGPPGSARPAEPGPCLSGQRGADHTAS) form a disordered region.

It belongs to the IspD/TarI cytidylyltransferase family. IspD subfamily. As to quaternary structure, homodimer. As to expression, ubiquitously expressed, with high expression in brain.

Its subcellular location is the cytoplasm. The protein localises to the cytosol. It carries out the reaction D-ribitol 5-phosphate + CTP + H(+) = CDP-L-ribitol + diphosphate. The catalysed reaction is D-ribose 5-phosphate + CTP + H(+) = CDP-D-ribose + diphosphate. It catalyses the reaction D-ribulose 5-phosphate + CTP + H(+) = CDP-D-ribulose + diphosphate. It functions in the pathway protein modification; protein glycosylation. Its function is as follows. Cytidylyltransferase required for protein O-linked mannosylation. Catalyzes the formation of CDP-ribitol nucleotide sugar from D-ribitol 5-phosphate. CDP-ribitol is a substrate of FKTN during the biosynthesis of the phosphorylated O-mannosyl trisaccharide (N-acetylgalactosamine-beta-3-N-acetylglucosamine-beta-4-(phosphate-6-)mannose), a carbohydrate structure present in alpha-dystroglycan (DAG1), which is required for binding laminin G-like domain-containing extracellular proteins with high affinity. Shows activity toward other pentose phosphate sugars and mediates formation of CDP-ribulose or CDP-ribose using CTP and ribulose-5-phosphate or ribose-5-phosphate, respectively. Not Involved in dolichol production. The protein is D-ribitol-5-phosphate cytidylyltransferase of Homo sapiens (Human).